A 631-amino-acid polypeptide reads, in one-letter code: Nucleoside triphosphatase I (631 aa).

Residues 42 to 204 (FLGLDTMHSI…TMIVNLLRPK (163 aa)) enclose the Helicase ATP-binding domain. 55-62 (HDTGVGKT) contacts ATP. The DEXH box signature appears at 141-144 (DECH). Residues 367 to 536 (KFTEVCLKIL…LFKVFKESSI (170 aa)) enclose the Helicase C-terminal domain. The segment at 457–524 (DIFILDMTWN…NIIKTKSKEF (68 aa)) is binding to the cap-specific mRNA (nucleoside-2'-O-)-methyltransferase.

The protein belongs to the helicase family. NPH I subfamily. As to quaternary structure, monomer. Interacts (via C-terminus) with RAP94 (via N-terminus). Interacts with the cap-specific mRNA (nucleoside-2'-O-)-methyltransferase.

It localises to the virion. The catalysed reaction is a ribonucleoside 5'-triphosphate + H2O = a ribonucleoside 5'-diphosphate + phosphate + H(+). Functionally, DNA-dependent ATPase required for providing the needed energy to achieve the termination of early transcripts. Acts in concert with the RAP94 subunit of the virion RNA polymerase and the capping enzyme/VTF to catalyze release of UUUUUNU-containing nascent RNA from the elongation complex. NPH-I must bind ssDNA in order to exhibit ATPase activity. This is Nucleoside triphosphatase I (NPH1) from Erythrocebus patas (Red guenon).